The sequence spans 340 residues: Centromere protein N (340 aa).

S227 and S236 each carry phosphoserine.

The protein belongs to the CENP-N/CHL4 family. Component of the CENPA-NAC complex, at least composed of CENPA, CENPC, CENPH, CENPM, CENPN, CENPT and CENPU. The CENPA-NAC complex interacts with the CENPA-CAD complex, composed of CENPI, CENPK, CENPL, CENPO, CENPP, CENPQ, CENPR and CENPS. Interacts directly with CENPA. Identified in a centromere complex containing histones H2A, H2B and H4, and at least CENPA, CENPB, CENPC, CENPT, CENPN, HJURP, SUPT16H, SSRP1 and RSF1.

It is found in the nucleus. It localises to the chromosome. The protein resides in the centromere. The protein localises to the kinetochore. Its function is as follows. Component of the CENPA-NAC (nucleosome-associated) complex, a complex that plays a central role in assembly of kinetochore proteins, mitotic progression and chromosome segregation. The CENPA-NAC complex recruits the CENPA-CAD (nucleosome distal) complex and may be involved in incorporation of newly synthesized CENPA into centromeres. CENPN is the first protein to bind specifically to CENPA nucleosomes and the direct binding of CENPA nucleosomes by CENPN is required for centromere assembly. Required for chromosome congression and efficiently align the chromosomes on a metaphase plate. The polypeptide is Centromere protein N (Cenpn) (Rattus norvegicus (Rat)).